We begin with the raw amino-acid sequence, 1766 residues long: E3 ubiquitin-protein ligase listerin (1766 aa).

Positions methionine 1–glycine 11 are enriched in basic residues. Positions methionine 1–arginine 20 are disordered. HEAT repeat units lie at residues lysine 100–lysine 138, valine 193–alanine 231, alanine 292–aspartate 329, asparagine 335–proline 372, and glutamate 512–glutamate 549. The interval lysine 529–aspartate 567 is disordered. The span at glutamate 551–serine 566 shows a compositional bias: basic and acidic residues. HEAT repeat units follow at residues glutamate 606 to glutamate 644, lysine 672 to valine 710, glutamine 916 to glutamate 953, histidine 1184 to tyrosine 1227, glycine 1314 to lysine 1355, and serine 1406 to leucine 1447. Residues cysteine 1715–arginine 1762 form an RING-type zinc finger.

This sequence belongs to the LTN1 family. In terms of assembly, component of the ribosome quality control complex (RQC), composed of at least the E3 ubiquitin ligase LTN1 and NEMF associated with the 60S ribosomal subunit. The complex probably also contains TCF25 as well as VCP/p97 and its ubiquitin-binding cofactors.

It is found in the cytoplasm. Its subcellular location is the cytosol. It carries out the reaction S-ubiquitinyl-[E2 ubiquitin-conjugating enzyme]-L-cysteine + [acceptor protein]-L-lysine = [E2 ubiquitin-conjugating enzyme]-L-cysteine + N(6)-ubiquitinyl-[acceptor protein]-L-lysine.. It functions in the pathway protein modification; protein ubiquitination. E3 ubiquitin-protein ligase component of the ribosome quality control complex (RQC), a ribosome-associated complex that mediates ubiquitination and extraction of incompletely synthesized nascent chains for proteasomal degradation. Within the RQC complex, LTN1 is recruited to stalled 60S ribosomal subunits by NEMF and mediates ubiquitination of stalled nascent chains. Ubiquitination leads to VCP/p97 recruitment for extraction and degradation of the incomplete translation product. The sequence is that of E3 ubiquitin-protein ligase listerin (LTN1) from Gallus gallus (Chicken).